Here is a 304-residue protein sequence, read N- to C-terminus: METVPPAVDLVLGASACCLACVFTNPLEVVKTRLQLQGELQKRGTYPRLYRGFVASVVAVVRADGLCGLQKGLAAGLLYQGLMNGVRFYCYSLACQAGLSQQPGGTVVAGAVAGALGAFVGSPAYLVKTQLQAQTVAAMAVGHQHHHESLLGALETIWRQQGLAGLWRGVGGAVPRVMVGSAAQLATFASAKAWVQERQWLPEDSWLVALAGGMISSIAVVAVMTPFDVVSTRLYNQPVDGAGRGKLYGGLTDCLVKIWRQEGPLALYKGLGPVYLRLGPHTILSMLFWDELRKLAGWGQHQGS.

Solcar repeat units follow at residues 4–97, 101–194, and 204–295; these read VPPA…ACQA, QQPG…AKAW, and DSWL…LRKL. A run of 6 helical transmembrane segments spans residues 7-27, 45-65, 98-120, 170-191, 206-226, and 278-301; these read AVDLVLGASACCLACVFTNPL, TYPRLYRGFVASVVAVVRADG, GLSQQPGGTVVAGAVAGALGAFV, VGGAVPRVMVGSAAQLATFASA, WLVALAGGMISSIAVVAVMTP, and LGPHTILSMLFWDELRKLAGWGQH.

The protein belongs to the mitochondrial carrier (TC 2.A.29) family.

The protein resides in the mitochondrion inner membrane. The catalysed reaction is a dicarboxylate(in) + sulfate(out) = a dicarboxylate(out) + sulfate(in). Putative antiporter that exchanges dicarboxylates and sulfur oxoanions across the inner membrane of mitochondria. The chain is Solute carrier family 25 member 34 (SLC25A34) from Bos taurus (Bovine).